The sequence spans 349 residues: MSPLWVRRLCIRVVDSLYGSFLYLPLAILFLKRSVTGFGTGEWDESQIPKLDGKVAVVTGGNAGIGYYTVKHLASRGAKVYLGARSESRAKAAIKRLLEENPLIPQENVVWLRLDLANQSQVVDAAVELQSKEQRLDILVNNAGIDPYDYIRTADGFEMTMAVKYTNPAAAAQEESDVRVITVSSSGEAYSSPTNQFTSPKDLDDPCASPGWENSCLGQAMRYGTTKLANVLFASELQRRMDEEDANIISLSLNPGTVRTDGAANVMPFMVRPLVRFLFTAPERGADTSLFAATAEEIKENSERWKGRYLDGPGRIKVPSLRARDAVAGRNLWNITEAAVRGTGALDRL.

The chain crosses the membrane as a helical span at residues 9-31; it reads LCIRVVDSLYGSFLYLPLAILFL. NADP(+) is bound by residues Ile65, Arg89, and Asp115. A glycan (N-linked (GlcNAc...) asparagine) is linked at Asn118. Residues Asn142 and Lys164 each coordinate NADP(+). Catalysis depends on proton donor residues Ser191 and Ser192. The NADP(+) site is built by Tyr223 and Lys227. Tyr223 (proton acceptor) is an active-site residue. Lys227 serves as the catalytic Lowers pKa of active site Tyr. N-linked (GlcNAc...) asparagine glycosylation is present at Asn334.

This sequence belongs to the short-chain dehydrogenases/reductases (SDR) family.

The protein resides in the membrane. It functions in the pathway secondary metabolite biosynthesis; terpenoid biosynthesis. Functionally, short chain dehydrogenase/reductase; part of the gene cluster that mediates the biosynthesis of diterpenoid pyrones. The first step of the pathway is the synthesis of the alpha-pyrone moiety by the polyketide synthase dpfgA via condensation of one acetyl-CoA starter unit with 3 malonyl-CoA units and 2 methylations. The alpha-pyrone is then combined with geranylgeranyl pyrophosphate (GGPP) formed by the GGPP synthase dpfgD through the action of the prenyltransferase dpfgC to yield a linear alpha-pyrone diterpenoid. Subsequent steps in the diterpenoid pyrone biosynthetic pathway involve the decalin core formation, which is initiated by the epoxidation of the C10-C11 olefin by the FAD-dependent oxidoreductase dpfgE, and is followed by a cyclization cascade catalyzed by the terpene cyclase dpfgB. The short chain dehydrogenase/reductase dpfgG then oxidizes the 8S hydroxy group to a ketone and the short chain dehydrogenase/reductase dpfgH reduces the ketone to the 8R hydroxy group to yield higginsianin B. Higginsianin B is further methylated by the methyltransferase dpfgI to produce the intermediate named FDDP B. The cytochrome P450 monooxygenase dfgpJ then catalyzes a three-step oxidation at C-27 to generate a carboxylic acid as well as C-26 hydroxylation. Finally, methyltransferase dpfgK methylates the carboxylic acid generated by dpfgJ, yielding the final diterpenoid pyrones from the pathway which were named FDDP D and FDDP E. This chain is Short chain dehydrogenase/reductase dpfgH, found in Gibberella zeae (strain ATCC MYA-4620 / CBS 123657 / FGSC 9075 / NRRL 31084 / PH-1) (Wheat head blight fungus).